The chain runs to 151 residues: Ribonuclease H (151 aa).

The 143-residue stretch at 1–143 (MEEYVIYTDG…VDRVARKEAA (143 aa)) folds into the RNase H type-1 domain. Mg(2+)-binding residues include Asp-9, Glu-48, Asp-71, and Asp-135.

This sequence belongs to the RNase H family. In terms of assembly, monomer. Mg(2+) is required as a cofactor.

It localises to the cytoplasm. The enzyme catalyses Endonucleolytic cleavage to 5'-phosphomonoester.. Functionally, endonuclease that specifically degrades the RNA of RNA-DNA hybrids. The polypeptide is Ribonuclease H (Neorickettsia sennetsu (strain ATCC VR-367 / Miyayama) (Ehrlichia sennetsu)).